The chain runs to 364 residues: DNA replication and repair protein RecF (364 aa).

G30–T37 provides a ligand contact to ATP.

Belongs to the RecF family.

Its subcellular location is the cytoplasm. Functionally, the RecF protein is involved in DNA metabolism; it is required for DNA replication and normal SOS inducibility. RecF binds preferentially to single-stranded, linear DNA. It also seems to bind ATP. The chain is DNA replication and repair protein RecF from Stenotrophomonas maltophilia (strain R551-3).